An 849-amino-acid polypeptide reads, in one-letter code: Disks large homolog 3 (849 aa).

The disordered stretch occupies residues 32–101 (DWQVPDPYGP…GKSTPKLNGS (70 aa)). Residues 41–53 (PSGGNGASSGYGG) are compositionally biased toward gly residues. Over residues 57–69 (QTLPSQAGATPTP) the composition is skewed to polar residues. PDZ domains are found at residues 149–235 (EIVL…VRRR), 244–330 (EVNL…VAKP), and 404–484 (KIIL…AQYR). Serine 157 carries the phosphoserine modification. The 71-residue stretch at 519-589 (KRSLYVRALF…PSKKRVEKKE (71 aa)) folds into the SH3 domain. The 176-residue stretch at 659-834 (ARPVIILGPM…IYNKIKQIIE (176 aa)) folds into the Guanylate kinase-like domain. Position 705 is a phosphotyrosine (tyrosine 705).

It belongs to the MAGUK family. As to quaternary structure, interacts through its PDZ domains with NETO1, GRIN2B, SYNGAP1 and APC. Interacts through its first two PDZ domains with ERBB4. Interacts through its third PDZ domain with NLGN1, and probably with NLGN2 and NLGN3. Interacts through its guanylate kinase-like domain with DLGAP1, DLGAP2, DLGAP3 and DLGAP4. Interacts with FRMPD4 (via C-terminus). Interacts with LRFN1, LRFN2 and LRFN4. Interacts with FLTP. Interacts with GPR85. Interacts with DGKI (via PDZ-binding motif).

Functionally, required for learning most likely through its role in synaptic plasticity following NMDA receptor signaling. This Mus musculus (Mouse) protein is Disks large homolog 3 (Dlg3).